Consider the following 463-residue polypeptide: Retinoic acid receptor RXR-gamma (463 aa).

Residues 1–138 (MYGNYSHFMK…TSPGSLVKHI (138 aa)) are modulating. The segment at 16 to 53 (GGSPGHTGSTSMSPSVALPTGKPMDSHPSYTDTPVSAP) is disordered. NR C4-type zinc fingers lie at residues 139-159 (CAIC…CEGC) and 175-199 (CRDN…YQKC). Positions 139-204 (CAICGDRSSG…RYQKCLVMGM (66 aa)) form a DNA-binding region, nuclear receptor. The interval 205-230 (KREAVQEERQRSRERAESEAECASSS) is hinge. Basic and acidic residues predominate over residues 211-222 (EERQRSRERAES). The segment at 211 to 232 (EERQRSRERAESEAECASSSHE) is disordered. The 229-residue stretch at 231–459 (HEDMPVERIL…SFLMEMLETP (229 aa)) folds into the NR LBD domain.

This sequence belongs to the nuclear hormone receptor family. NR2 subfamily. In terms of assembly, homodimer. Heterodimer with a RAR molecule. Binds DNA preferentially as a RAR/RXR heterodimer. Interacts with RARA. Post-translationally, acetylated by EP300.

Its subcellular location is the nucleus. The protein localises to the cytoplasm. Receptor for retinoic acid. Retinoic acid receptors bind as heterodimers to their target response elements in response to their ligands, all-trans or 9-cis retinoic acid, and regulate gene expression in various biological processes. The RAR/RXR heterodimers bind to the retinoic acid response elements (RARE) composed of tandem 5'-AGGTCA-3' sites known as DR1-DR5. The high affinity ligand for RXRs is 9-cis retinoic acid. This is Retinoic acid receptor RXR-gamma (Rxrg) from Mus musculus (Mouse).